The following is a 124-amino-acid chain: Small ribosomal subunit protein uS13 (124 aa).

The segment at Pro-99–Lys-124 is disordered. The segment covering Lys-113 to Lys-124 has biased composition (basic residues).

This sequence belongs to the universal ribosomal protein uS13 family. In terms of assembly, part of the 30S ribosomal subunit. Forms a loose heterodimer with protein S19. Forms two bridges to the 50S subunit in the 70S ribosome.

Functionally, located at the top of the head of the 30S subunit, it contacts several helices of the 16S rRNA. In the 70S ribosome it contacts the 23S rRNA (bridge B1a) and protein L5 of the 50S subunit (bridge B1b), connecting the 2 subunits; these bridges are implicated in subunit movement. Contacts the tRNAs in the A and P-sites. The protein is Small ribosomal subunit protein uS13 of Lachnospira eligens (strain ATCC 27750 / DSM 3376 / VPI C15-48 / C15-B4) (Eubacterium eligens).